A 108-amino-acid polypeptide reads, in one-letter code: Large ribosomal subunit protein uL24 (108 aa).

The protein belongs to the universal ribosomal protein uL24 family. As to quaternary structure, part of the 50S ribosomal subunit.

Its function is as follows. One of two assembly initiator proteins, it binds directly to the 5'-end of the 23S rRNA, where it nucleates assembly of the 50S subunit. One of the proteins that surrounds the polypeptide exit tunnel on the outside of the subunit. The chain is Large ribosomal subunit protein uL24 from Mycoplasma capricolum subsp. capricolum (strain California kid / ATCC 27343 / NCTC 10154).